We begin with the raw amino-acid sequence, 686 residues long: Solute carrier family 22 member 23 (686 aa).

2 disordered regions span residues 1-62 and 169-193; these read MAID…GGGP and GNRSNSSGADGGDTPPLPSPPDKGD. N-linked (GlcNAc...) asparagine glycosylation is present at Asn-24. 2 consecutive transmembrane segments (helical) span residues 234–254 and 258–278; these read FSLLVGLIFGYLITGCIADWV and PVLLFSIIFILIFGLTVALSV. N-linked (GlcNAc...) asparagine glycosylation is present at Asn-279. Helical transmembrane passes span 288–308, 315–335, 344–364, 467–487, 494–514, 538–558, 569–589, and 598–618; these read FFEGFCLAGIILTLYALRIEL, FMITMVASFVAMAGQFLMPGL, VLQALIICPFLLMLLYWSIFP, ADYYTTASIALVSCLAMCVVV, GGLLLFMILTALASLLQLGLL, IAFSIVGMFASHAVGSLSVFF, CGGLGLVLASAGFGMLTAPII, and FLHHIIFACCTLICIICILLL.

Belongs to the major facilitator (TC 2.A.1) superfamily. Organic cation transporter (TC 2.A.1.19) family.

The protein localises to the membrane. This Homo sapiens (Human) protein is Solute carrier family 22 member 23 (SLC22A23).